Reading from the N-terminus, the 182-residue chain is Transcription termination/antitermination protein NusG (182 aa).

The 31-residue stretch at 131-161 folds into the KOW domain; it reads GEVVRVNEGPFADFNGTVEEVDYEKSRLKVS.

It belongs to the NusG family.

Participates in transcription elongation, termination and antitermination. This Vibrio parahaemolyticus serotype O3:K6 (strain RIMD 2210633) protein is Transcription termination/antitermination protein NusG.